Reading from the N-terminus, the 284-residue chain is Nucleotide-binding protein Shewmr7_3352 (284 aa).

8 to 15 (GRSGSGKS) provides a ligand contact to ATP. 56-59 (DVRN) lines the GTP pocket.

The protein belongs to the RapZ-like family.

Functionally, displays ATPase and GTPase activities. In Shewanella sp. (strain MR-7), this protein is Nucleotide-binding protein Shewmr7_3352.